A 323-amino-acid chain; its full sequence is tRNA-dihydrouridine synthase B (323 aa).

FMN-binding positions include 16 to 18 (PMA) and Gln70. Residue Cys100 is the Proton donor of the active site. FMN contacts are provided by residues Lys139, 200–202 (NGD), and 224–225 (GR).

Belongs to the Dus family. DusB subfamily. FMN is required as a cofactor.

The enzyme catalyses a 5,6-dihydrouridine in tRNA + NAD(+) = a uridine in tRNA + NADH + H(+). It catalyses the reaction a 5,6-dihydrouridine in tRNA + NADP(+) = a uridine in tRNA + NADPH + H(+). Functionally, catalyzes the synthesis of 5,6-dihydrouridine (D), a modified base found in the D-loop of most tRNAs, via the reduction of the C5-C6 double bond in target uridines. This is tRNA-dihydrouridine synthase B from Proteus vulgaris.